A 683-amino-acid chain; its full sequence is Zinc finger protein 510 (683 aa).

The KRAB domain occupies Val-46–Pro-117. The segment at Phe-254 to His-276 adopts a C2H2-type 1; degenerate zinc-finger fold. 9 C2H2-type zinc fingers span residues Tyr-404–His-426, Phe-432–His-454, Tyr-460–His-482, Tyr-488–His-510, Phe-516–His-538, Tyr-544–His-566, Phe-572–His-594, Phe-600–His-622, and Phe-628–His-650.

It belongs to the krueppel C2H2-type zinc-finger protein family.

The protein localises to the nucleus. Its function is as follows. May be involved in transcriptional regulation. In Homo sapiens (Human), this protein is Zinc finger protein 510 (ZNF510).